The primary structure comprises 186 residues: Tumor necrosis factor alpha-induced protein 8-like protein 1 (186 aa).

This sequence belongs to the TNFAIP8 family.

It localises to the cytoplasm. In Gallus gallus (Chicken), this protein is Tumor necrosis factor alpha-induced protein 8-like protein 1 (TNFAIP8L1).